The chain runs to 317 residues: Probable cell division protein WhiA (317 aa).

A DNA-binding region (H-T-H motif) is located at residues 275–308 (SLKELGEMLVPKVGKSGVNHRMRKIDELAEKLEE).

It belongs to the WhiA family.

Functionally, involved in cell division and chromosome segregation. This chain is Probable cell division protein WhiA, found in Desulfitobacterium hafniense (strain Y51).